The following is a 246-amino-acid chain: UDP-N-acetyl-D-mannosaminuronic acid transferase (246 aa).

Belongs to the glycosyltransferase 26 family.

It catalyses the reaction UDP-N-acetyl-alpha-D-mannosaminouronate + N-acetyl-alpha-D-glucosaminyl-di-trans,octa-cis-undecaprenyl diphosphate = beta-D-ManNAcA-(1-&gt;4)-alpha-D-GlcNAc-di-trans,octa-cis-undecaprenyl diphosphate + UDP + H(+). The protein operates within bacterial outer membrane biogenesis; enterobacterial common antigen biosynthesis. In terms of biological role, catalyzes the synthesis of Und-PP-GlcNAc-ManNAcA (Lipid II), the second lipid-linked intermediate involved in enterobacterial common antigen (ECA) synthesis. The chain is UDP-N-acetyl-D-mannosaminuronic acid transferase from Escherichia coli (strain ATCC 8739 / DSM 1576 / NBRC 3972 / NCIMB 8545 / WDCM 00012 / Crooks).